A 455-amino-acid polypeptide reads, in one-letter code: MNHARDTIAAVATAQGRGGVGIVRVSGPLSGQLAQAICRRELKPRFAHHGPFYGEQELPLDEGLAIYFPGPNSFTGEDVLELQGHGGPVVLDLLLRRCLELGARLARPGEFSERAFLNDKLDLAQAEAIADLIEASSEQAARNALRSLQGEFSKRVHALTESLIQLRIYVEAAIDFPEEEIDFLADGHVLSQLDGVRADLSTVLREAGQGALLRDGMTVVIAGRPNAGKSSLLNALAGREAAIVTDIAGTTRDVLREHIHIDGMPLHVVDTAGLRDTDDQVERIGVERALKAIGEADRVLLVVDSTAPEAADPFALWPEFLEQRPDPARVTLIRNKADLSGEAVTLQTSADGHVTLSLSAKSADGLELLREHLKACMGYQQTAESGFSARRRHLEALHQAEQYLEHGRNQLTLMGAGELLAEDLRMAQQALGEITGAFSSDDLLGRIFSSFCIGK.

(6S)-5-formyl-5,6,7,8-tetrahydrofolate is bound by residues Arg-24, Glu-81, and Lys-120. In terms of domain architecture, TrmE-type G spans 216–378 (GMTVVIAGRP…LREHLKACMG (163 aa)). Asn-226 provides a ligand contact to K(+). Residues 226 to 231 (NAGKSS), 245 to 251 (TDIAGTT), 270 to 273 (DTAG), and 335 to 338 (NKAD) contribute to the GTP site. Position 230 (Ser-230) interacts with Mg(2+). Positions 245, 247, and 250 each coordinate K(+). Residue Thr-251 participates in Mg(2+) binding. Lys-455 serves as a coordination point for (6S)-5-formyl-5,6,7,8-tetrahydrofolate.

The protein belongs to the TRAFAC class TrmE-Era-EngA-EngB-Septin-like GTPase superfamily. TrmE GTPase family. In terms of assembly, homodimer. Heterotetramer of two MnmE and two MnmG subunits. K(+) is required as a cofactor.

The protein resides in the cytoplasm. Exhibits a very high intrinsic GTPase hydrolysis rate. Involved in the addition of a carboxymethylaminomethyl (cmnm) group at the wobble position (U34) of certain tRNAs, forming tRNA-cmnm(5)s(2)U34. The sequence is that of tRNA modification GTPase MnmE from Ectopseudomonas mendocina (strain ymp) (Pseudomonas mendocina).